Consider the following 588-residue polypeptide: Complement component C8 beta chain (588 aa).

Positions 1 to 30 are cleaved as a signal peptide; the sequence is MFRVAIPRSALNLHSCLLHVTLSLVLISKA. The propeptide occupies 31–46; it reads AITTAGNEDSDVREAR. One can recognise a TSP type-1 1 domain in the interval 58-113; that stretch reads DCVISDWSAWSRCDTCQKKRYRYAKLDQPSQFGGEPCHFHDMEDEACDVPDRYTCD. Disulfide bonds link cysteine 59/cysteine 94, cysteine 70/cysteine 104, cysteine 73/cysteine 112, cysteine 118/cysteine 129, cysteine 123/cysteine 142, cysteine 136/cysteine 151, and cysteine 158/cysteine 196. Tryptophan 64 and tryptophan 67 each carry a C-linked (Man) tryptophan glycan. The 38-residue stretch at 115 to 152 folds into the LDL-receptor class A domain; it reads IPLCEGFLCTQTGRCIHRTLQCNGEDDCGDMSDEVGCK. Residues leucine 134, asparagine 137, glutamate 139, aspartate 141, aspartate 147, and glutamate 148 each coordinate Ca(2+). Residues 154–500 form the MACPF domain; that stretch reads VPKPCRQEAE…EYLAESSSCR (347 aa). Transmembrane regions (beta stranded) follow at residues 248–255, 258–265, 375–382, and 388–395; these read TIVSIGFA, GIAEFGFN, TQAGLKIG, and VYVSAGIE. Cystine bridges form between cysteine 374/cysteine 399, cysteine 499/cysteine 547, cysteine 501/cysteine 517, cysteine 504/cysteine 519, and cysteine 521/cysteine 530. The 31-residue stretch at 501 to 531 folds into the EGF-like domain; sequence CAPCHNNGVAVLRGTRCDCVCPTGYTGRGCE. A TSP type-1 2 domain is found at 542–588; the sequence is DGSWSCWGAWSSCSGRKMSRSRQCNNPVPSDGGLACRGLQQESTDCF. 2 C-linked (Man) tryptophan glycosylation sites follow: tryptophan 548 and tryptophan 551. A disulfide bond links cysteine 554 and cysteine 587.

This sequence belongs to the complement C6/C7/C8/C9 family. Heterotrimer of 3 chains: alpha (C8A), beta (C8B) and gamma (C8G); the alpha and gamma chains are disulfide bonded. Component of the membrane attack complex (MAC), composed of complement C5b, C6, C7, C8A, C8B, C8G and multiple copies of the pore-forming subunit C9.

It is found in the secreted. It localises to the target cell membrane. Functionally, component of the membrane attack complex (MAC), a multiprotein complex activated by the complement cascade, which inserts into a target cell membrane and forms a pore, leading to target cell membrane rupture and cell lysis. The MAC is initiated by proteolytic cleavage of C5 into complement C5b in response to the classical, alternative, lectin and GZMK complement pathways. The complement pathways consist in a cascade of proteins that leads to phagocytosis and breakdown of pathogens and signaling that strengthens the adaptive immune system. C8B, together with C8A and C8G, inserts into the target membrane, but does not form pores by itself. During MAC assembly, associates with C5b, C6 and C7 to form the C5b8 intermediate complex that inserts into the target membrane and traverses the bilayer increasing membrane rigidity. The polypeptide is Complement component C8 beta chain (c8b) (Paralichthys olivaceus (Bastard halibut)).